The primary structure comprises 264 residues: Thymidylate synthase (264 aa).

A dUMP-binding site is contributed by Arg21. His51 contacts (6R)-5,10-methylene-5,6,7,8-tetrahydrofolate. 126–127 contributes to the dUMP binding site; the sequence is RR. The Nucleophile role is filled by Cys146. DUMP is bound by residues 166-169, Asn177, and 207-209; these read RSCD and HLY. Asp169 lines the (6R)-5,10-methylene-5,6,7,8-tetrahydrofolate pocket. (6R)-5,10-methylene-5,6,7,8-tetrahydrofolate is bound at residue Ser263.

Belongs to the thymidylate synthase family. Bacterial-type ThyA subfamily. As to quaternary structure, homodimer.

It localises to the cytoplasm. It catalyses the reaction dUMP + (6R)-5,10-methylene-5,6,7,8-tetrahydrofolate = 7,8-dihydrofolate + dTMP. Its pathway is pyrimidine metabolism; dTTP biosynthesis. Its function is as follows. Catalyzes the reductive methylation of 2'-deoxyuridine-5'-monophosphate (dUMP) to 2'-deoxythymidine-5'-monophosphate (dTMP) while utilizing 5,10-methylenetetrahydrofolate (mTHF) as the methyl donor and reductant in the reaction, yielding dihydrofolate (DHF) as a by-product. This enzymatic reaction provides an intracellular de novo source of dTMP, an essential precursor for DNA biosynthesis. This chain is Thymidylate synthase, found in Buchnera aphidicola subsp. Acyrthosiphon pisum (strain APS) (Acyrthosiphon pisum symbiotic bacterium).